We begin with the raw amino-acid sequence, 146 residues long: Ribosomal RNA large subunit methyltransferase H (146 aa).

Residues leucine 68, glycine 95, and 114–119 each bind S-adenosyl-L-methionine; that span reads LSSLTF.

This sequence belongs to the RNA methyltransferase RlmH family. As to quaternary structure, homodimer.

Its subcellular location is the cytoplasm. The catalysed reaction is pseudouridine(1915) in 23S rRNA + S-adenosyl-L-methionine = N(3)-methylpseudouridine(1915) in 23S rRNA + S-adenosyl-L-homocysteine + H(+). Specifically methylates the pseudouridine at position 1915 (m3Psi1915) in 23S rRNA. This chain is Ribosomal RNA large subunit methyltransferase H, found in Thermodesulfovibrio yellowstonii (strain ATCC 51303 / DSM 11347 / YP87).